Reading from the N-terminus, the 133-residue chain is Aspartate 1-decarboxylase (133 aa).

Serine 26 acts as the Schiff-base intermediate with substrate; via pyruvic acid in catalysis. Residue serine 26 is modified to Pyruvic acid (Ser). Residue threonine 58 coordinates substrate. Tyrosine 59 acts as the Proton donor in catalysis. Substrate is bound at residue 74–76; the sequence is GAA.

Belongs to the PanD family. In terms of assembly, heterooctamer of four alpha and four beta subunits. Pyruvate serves as cofactor. Post-translationally, is synthesized initially as an inactive proenzyme, which is activated by self-cleavage at a specific serine bond to produce a beta-subunit with a hydroxyl group at its C-terminus and an alpha-subunit with a pyruvoyl group at its N-terminus.

The protein localises to the cytoplasm. The enzyme catalyses L-aspartate + H(+) = beta-alanine + CO2. It participates in cofactor biosynthesis; (R)-pantothenate biosynthesis; beta-alanine from L-aspartate: step 1/1. In terms of biological role, catalyzes the pyruvoyl-dependent decarboxylation of aspartate to produce beta-alanine. The polypeptide is Aspartate 1-decarboxylase (Legionella pneumophila (strain Lens)).